We begin with the raw amino-acid sequence, 245 residues long: RNA polymerase sigma factor SigI5 (245 aa).

Residues 60–73 (DEYSIGLMAFNEAI) carry the Polymerase core binding motif. Positions 202–221 (MKELSKIIDVHPKTVERNRA) form a DNA-binding region, H-T-H motif.

Belongs to the sigma-70 factor family. SigI subfamily. In terms of assembly, interacts with RsgI5.

Its subcellular location is the cytoplasm. Negatively regulated by the anti-sigma-I factor RsgI5. Binding of the polysaccharide substrate to RsgI5 may lead to the release and activation of SigI5. Functionally, sigma factors are initiation factors that promote the attachment of RNA polymerase to specific initiation sites and are then released. This sigma factor is involved in regulation of cellulosomal genes via an external polysaccharide-sensing mechanism. This is RNA polymerase sigma factor SigI5 from Acetivibrio thermocellus (strain ATCC 27405 / DSM 1237 / JCM 9322 / NBRC 103400 / NCIMB 10682 / NRRL B-4536 / VPI 7372) (Clostridium thermocellum).